A 146-amino-acid chain; its full sequence is Transcriptional regulator MraZ (146 aa).

SpoVT-AbrB domains lie at 4–46 (TVFR…SQTE) and 75–118 (TVKV…PEQR).

It belongs to the MraZ family. In terms of assembly, forms oligomers.

Its subcellular location is the cytoplasm. It is found in the nucleoid. The protein is Transcriptional regulator MraZ of Mesomycoplasma hyopneumoniae (strain 232) (Mycoplasma hyopneumoniae).